A 207-amino-acid chain; its full sequence is Probable GTP-binding protein EngB (207 aa).

The 172-residue stretch at 22–193 (RVPEIVFAGR…LAHFDHYLSG (172 aa)) folds into the EngB-type G domain. GTP contacts are provided by residues 30–37 (GRSNVGKS), 57–61 (GKTRL), 75–78 (DIPG), 142–145 (TKDD), and 172–174 (YSS). Mg(2+) contacts are provided by Ser-37 and Thr-59.

This sequence belongs to the TRAFAC class TrmE-Era-EngA-EngB-Septin-like GTPase superfamily. EngB GTPase family. Mg(2+) is required as a cofactor.

In terms of biological role, necessary for normal cell division and for the maintenance of normal septation. The protein is Probable GTP-binding protein EngB of Chlorobium luteolum (strain DSM 273 / BCRC 81028 / 2530) (Pelodictyon luteolum).